Consider the following 401-residue polypeptide: Argininosuccinate synthase (401 aa).

ATP is bound by residues 7-15 and A34; that span reads AYSGGLDTS. The L-citrulline site is built by Y85 and S90. G115 serves as a coordination point for ATP. Residues T117, N121, and D122 each coordinate L-aspartate. L-citrulline is bound at residue N121. 5 residues coordinate L-citrulline: R125, S174, S183, E259, and Y271.

The protein belongs to the argininosuccinate synthase family. Type 1 subfamily. As to quaternary structure, homotetramer.

Its subcellular location is the cytoplasm. It carries out the reaction L-citrulline + L-aspartate + ATP = 2-(N(omega)-L-arginino)succinate + AMP + diphosphate + H(+). It participates in amino-acid biosynthesis; L-arginine biosynthesis; L-arginine from L-ornithine and carbamoyl phosphate: step 2/3. This Desulfitobacterium hafniense (strain DSM 10664 / DCB-2) protein is Argininosuccinate synthase.